A 518-amino-acid chain; its full sequence is Bifunctional purine biosynthesis protein PurH (518 aa).

An MGS-like domain is found at 1–146 (MARIALISVS…KNHESVSILT (146 aa)).

The protein belongs to the PurH family.

The enzyme catalyses (6R)-10-formyltetrahydrofolate + 5-amino-1-(5-phospho-beta-D-ribosyl)imidazole-4-carboxamide = 5-formamido-1-(5-phospho-D-ribosyl)imidazole-4-carboxamide + (6S)-5,6,7,8-tetrahydrofolate. It carries out the reaction IMP + H2O = 5-formamido-1-(5-phospho-D-ribosyl)imidazole-4-carboxamide. It participates in purine metabolism; IMP biosynthesis via de novo pathway; 5-formamido-1-(5-phospho-D-ribosyl)imidazole-4-carboxamide from 5-amino-1-(5-phospho-D-ribosyl)imidazole-4-carboxamide (10-formyl THF route): step 1/1. It functions in the pathway purine metabolism; IMP biosynthesis via de novo pathway; IMP from 5-formamido-1-(5-phospho-D-ribosyl)imidazole-4-carboxamide: step 1/1. The protein is Bifunctional purine biosynthesis protein PurH of Prochlorococcus marinus (strain MIT 9211).